The sequence spans 69 residues: DNA-directed RNA polymerase subunit epsilon (69 aa).

The protein belongs to the RNA polymerase subunit epsilon family. In terms of assembly, RNAP is composed of a core of 2 alpha, a beta and a beta' subunit. The core is associated with a delta subunit, and at least one of epsilon or omega. When a sigma factor is associated with the core the holoenzyme is formed, which can initiate transcription.

It catalyses the reaction RNA(n) + a ribonucleoside 5'-triphosphate = RNA(n+1) + diphosphate. Functionally, a non-essential component of RNA polymerase (RNAP). This Lysinibacillus sphaericus (strain C3-41) protein is DNA-directed RNA polymerase subunit epsilon.